The chain runs to 393 residues: Tryptophan synthase beta chain (393 aa).

An N6-(pyridoxal phosphate)lysine modification is found at lysine 86.

Belongs to the TrpB family. Tetramer of two alpha and two beta chains. It depends on pyridoxal 5'-phosphate as a cofactor.

The catalysed reaction is (1S,2R)-1-C-(indol-3-yl)glycerol 3-phosphate + L-serine = D-glyceraldehyde 3-phosphate + L-tryptophan + H2O. It functions in the pathway amino-acid biosynthesis; L-tryptophan biosynthesis; L-tryptophan from chorismate: step 5/5. Functionally, the beta subunit is responsible for the synthesis of L-tryptophan from indole and L-serine. The polypeptide is Tryptophan synthase beta chain (Alteromonas mediterranea (strain DSM 17117 / CIP 110805 / LMG 28347 / Deep ecotype)).